Consider the following 917-residue polypeptide: Protein Ami (917 aa).

The signal sequence occupies residues 1-30 (MKKLVKSAVVFAGLVFIGTSATMITEKASA). The N-acetylmuramoyl-L-alanine amidase domain occupies 118 to 245 (KPEGIVIHET…YLGGTTHTDP (128 aa)). Residues 262-917 (LINEKYKAMQ…KAANLSAKKQ (656 aa)) are GW repeat region, necessary and sufficient for cell surface attachment. 8 GW domains span residues 279–358 (YDKA…TFYT), 361–435 (MEKT…TTKY), 440–519 (YDKA…TFYT), 522–596 (MEKN…ATQY), 601–679 (YDKA…TFYT), 682–756 (MEKT…TTKY), 761–840 (YDKA…TFYT), and 843–917 (MEKN…AKKQ).

The protein in the N-terminal section; belongs to the N-acetylmuramoyl-L-alanine amidase 2 family.

Its subcellular location is the cell surface. The protein localises to the cell membrane. Functionally, a bacteriolysin able to lyse both L.monocytogenes and S.aureus. The chain is Protein Ami from Listeria monocytogenes serotype 1/2a (strain EGD / Mackaness).